The sequence spans 213 residues: N-(5'-phosphoribosyl)anthranilate isomerase (213 aa).

It belongs to the TrpF family.

The enzyme catalyses N-(5-phospho-beta-D-ribosyl)anthranilate = 1-(2-carboxyphenylamino)-1-deoxy-D-ribulose 5-phosphate. The protein operates within amino-acid biosynthesis; L-tryptophan biosynthesis; L-tryptophan from chorismate: step 3/5. The protein is N-(5'-phosphoribosyl)anthranilate isomerase of Caulobacter sp. (strain K31).